The primary structure comprises 296 residues: Formamidopyrimidine-DNA glycosylase (296 aa).

The active-site Schiff-base intermediate with DNA is the Pro-2. The active-site Proton donor is the Glu-3. The active-site Proton donor; for beta-elimination activity is the Lys-61. 3 residues coordinate DNA: His-95, Arg-122, and Lys-169. The FPG-type zinc finger occupies 255-289 (NAYGRNDQPCARCGTPIQRETFMNRSSYSCPRCQP). Arg-279 (proton donor; for delta-elimination activity) is an active-site residue.

The protein belongs to the FPG family. In terms of assembly, monomer. Requires Zn(2+) as cofactor.

It catalyses the reaction Hydrolysis of DNA containing ring-opened 7-methylguanine residues, releasing 2,6-diamino-4-hydroxy-5-(N-methyl)formamidopyrimidine.. The enzyme catalyses 2'-deoxyribonucleotide-(2'-deoxyribose 5'-phosphate)-2'-deoxyribonucleotide-DNA = a 3'-end 2'-deoxyribonucleotide-(2,3-dehydro-2,3-deoxyribose 5'-phosphate)-DNA + a 5'-end 5'-phospho-2'-deoxyribonucleoside-DNA + H(+). In terms of biological role, involved in base excision repair of DNA damaged by oxidation or by mutagenic agents. Acts as a DNA glycosylase that recognizes and removes damaged bases. Has a preference for oxidized purines, such as 7,8-dihydro-8-oxoguanine (8-oxoG). Has AP (apurinic/apyrimidinic) lyase activity and introduces nicks in the DNA strand. Cleaves the DNA backbone by beta-delta elimination to generate a single-strand break at the site of the removed base with both 3'- and 5'-phosphates. The protein is Formamidopyrimidine-DNA glycosylase of Thermobifida fusca (strain YX).